The following is a 206-amino-acid chain: Large ribosomal subunit protein uL4 (206 aa).

The interval 47 to 71 (TRAQKGRSEVAGSTRKQWRQKGTGR) is disordered.

This sequence belongs to the universal ribosomal protein uL4 family. As to quaternary structure, part of the 50S ribosomal subunit.

Its function is as follows. One of the primary rRNA binding proteins, this protein initially binds near the 5'-end of the 23S rRNA. It is important during the early stages of 50S assembly. It makes multiple contacts with different domains of the 23S rRNA in the assembled 50S subunit and ribosome. Functionally, forms part of the polypeptide exit tunnel. This chain is Large ribosomal subunit protein uL4, found in Nitrosomonas eutropha (strain DSM 101675 / C91 / Nm57).